We begin with the raw amino-acid sequence, 262 residues long: MTKQFAVIGNPIEQSRSPELHHAFAEKTGVDLNYQKRLAPLDGFESSMRSFFAEGGSGMNVTVPFKEQAFALCNVLTERAQIAKAVNTLWMENGKLHGDNTDGQGLVAAIQALEWNLENTTILILGAGGATRGVIYPLVQAGAKKIVIANRTLARAEQLVDDLKTAVPQAQLQAISLNDLEGDFDIVINATSASLSGDALQLPEKLKFKYAYEMAYGKPSSFLDQAKQRNVPYAEGFGMLVGQAIEAFSIWNGVRPQLKDFL.

Residues 15-17 (SRS) and T62 each bind shikimate. The Proton acceptor role is filled by K66. Position 78 (E78) interacts with NADP(+). Shikimate is bound by residues N87 and D102. NADP(+)-binding positions include 126 to 130 (GAGGA), 150 to 155 (NRTLAR), and M214. Residue Y216 participates in shikimate binding. NADP(+) is bound at residue G236.

It belongs to the shikimate dehydrogenase family. As to quaternary structure, homodimer.

The catalysed reaction is shikimate + NADP(+) = 3-dehydroshikimate + NADPH + H(+). The protein operates within metabolic intermediate biosynthesis; chorismate biosynthesis; chorismate from D-erythrose 4-phosphate and phosphoenolpyruvate: step 4/7. Functionally, involved in the biosynthesis of the chorismate, which leads to the biosynthesis of aromatic amino acids. Catalyzes the reversible NADPH linked reduction of 3-dehydroshikimate (DHSA) to yield shikimate (SA). In Acinetobacter baumannii (strain SDF), this protein is Shikimate dehydrogenase (NADP(+)).